We begin with the raw amino-acid sequence, 182 residues long: tRNA-splicing endonuclease (182 aa).

Residues tyrosine 119, histidine 127, and lysine 158 contribute to the active site.

This sequence belongs to the tRNA-intron endonuclease family. Archaeal short subfamily. Homotetramer; although the tetramer contains four active sites, only two participate in the cleavage. Therefore, it should be considered as a dimer of dimers.

It catalyses the reaction pretRNA = a 3'-half-tRNA molecule with a 5'-OH end + a 5'-half-tRNA molecule with a 2',3'-cyclic phosphate end + an intron with a 2',3'-cyclic phosphate and a 5'-hydroxyl terminus.. Its function is as follows. Endonuclease that removes tRNA introns. Cleaves pre-tRNA at the 5'- and 3'-splice sites to release the intron. The products are an intron and two tRNA half-molecules bearing 2',3' cyclic phosphate and 5'-OH termini. Recognizes a pseudosymmetric substrate in which 2 bulged loops of 3 bases are separated by a stem of 4 bp. This chain is tRNA-splicing endonuclease, found in Saccharolobus islandicus (strain L.S.2.15 / Lassen #1) (Sulfolobus islandicus).